Reading from the N-terminus, the 171-residue chain is uncharacterized protein (171 aa).

The 134-residue stretch at 33-166 folds into the HTH marR-type domain; it reads AISIATNLYR…LTGLLRKVAD (134 aa). A DNA-binding region (H-T-H motif) is located at residues 80-103; sequence TRKIAELSGISTATASNVIKTLEK.

This is an uncharacterized protein from Bacillus subtilis (strain 168).